The primary structure comprises 375 residues: Secondary metabolism regulator laeA (375 aa).

Over residues 15 to 26 (ASPNRNNYSYQG) the composition is skewed to polar residues. 2 disordered regions span residues 15–37 (ASPNRNNYSYQGIESYDSGRSRQ) and 50–75 (QEPPREPPDNNDPYDGHGGPAGTSHY).

This sequence belongs to the methyltransferase superfamily. LaeA methyltransferase family. In terms of assembly, component of the heterotrimeric velvet complex composed of laeA, veA and velB; VeA acting as a bridging protein between laeA and velB.

It is found in the nucleus. The catalysed reaction is L-methionyl-[protein] + S-adenosyl-L-methionine = S-methyl-L-methionyl-[protein] + S-adenosyl-L-homocysteine. Methyltransferase that performs automethylation. No other methyl-accepting substrate has been identified yet. Component of the velvet transcription factor complex that acts as a global regulator for secondary metabolite gene expression. Controls the expression of the citric acid, demethylkotanin, orlandin, asperrubrol, tensidol B, atromentin and JBIR8 gene clusters. Also represses the expression of genes related to the production of BMS-192548 and aspernigrin A. This Aspergillus niger (strain ATCC 1015 / CBS 113.46 / FGSC A1144 / LSHB Ac4 / NCTC 3858a / NRRL 328 / USDA 3528.7) protein is Secondary metabolism regulator laeA.